The chain runs to 4042 residues: MGSSSKDYTNEPIAIVGSACRFPGGASEPSKLWDLLEHPTDVLKEIPESRFSVDGFYHPNGLHHGTTNVRHSYILDDDIRLFDAQFFGIKPIEANSIDPQQRLLMETVYEGLEAAGQSIQRLQGSQTAVYVGLMSSDYKDLLGNDQESYPTLVALHQAVQLLRSGDGTNVALAAGTNLLLNPDQYIAESKLKMLSPDGRSRMWDEKANGYARGDGIAVVVLKRLSQALEDGDHIECLIRETQINQDGKTKGITMPSATAQTALIRATYAKAGLDLSKPSDRPQYFEAHGTGTPAGDPIEAEAIHTAFFGGDLGEAGHDKLFVGSIKTVIGHTEGTAGLAAVLKASLALQNRAVPPNRLFDRLNSKIRPFYGDLEILTKAQEWPVLVPGSVARASVNSFGFGGANAHAILEAYEPPSLVSDDVLVTPLAPVQFSAASETALRGTLRKYAEFLEKNQDVNLRDLAWTLNTRRSVLAARTAVFGANALDLAHELQKRAEADVATLIPVASRSLPAKPRILGVFTGQGAQWARMGAELLDASPAVDRIISELEKSLSTLPDGPEWSVKGEILATGGASRVAEAAISQPLCTAVQIVLVDLLKSAGINFEAVVGHSSGEMGAAYAAGYLSAQDAIRVAYYRGRHLHLAGGLGGEQGGMMAVGTSFEDAEELCSLPEFQGRIGVAAINSGASVTLSGDLDTIEAAKEILDDEKKFARLLKVDKAYHSHHMIACSDAYRKSLADCSIKVLRPSRGSATWLSSVYGEDIVDYRKELTSEYWINNMVRPVLFSQAVEFAAAEKGPFDCAIEVGPHPALKGPALQVLQEFLGNSIPYTGLLSRDRDDKKAFAEGLGYLWQAFGENAIDHKSFDTFVAGASAPLPQITSNLPTYAWDHDRRFWHESRQYAANRTKPDPTHELLGTKCPDGTEQQCRWRNMLRPQEIPWLAGHQIQGQMVFPAAGYVSAAVEAVKFSNEGLPITTIEIEDFVIGQAIIFNDDYASVETQFTLTNIVSDHMSWSASFAFYSASQKHSLGMDLNASGRISALFGPPKDDVLPPSTGRELNMIDVDPEQFYNSLSKLGFGYTGAFKALRNLYRKMDVAMGEIQNPRSTDPAYNLLLHPATFDNAIQSIILAYCYPGDGRLWSVHLPTSIKKIRINPSLCENSAGQEAVLHFKSTITSGRSTEIQGDVELYDTNGVNSIMQLEGLHTKPLGHATPENDRTLFLETIWDTAEPTKELALLAQPDISKKAQLGLDIERVAFYYIRNLGHVTTKADREQAEDYHKHFFNYIDHTVVSVNNGTSLFAKKEWMHDTHEQVLDIIKSYPESIDMKLMYAVGEHLLPVIRHETTMLEYMREDDMLNDFYVKALGFDEYTETMADQVCQLAHRYPHMNVLEIGAGTGGATKRIFKKLGKRFSSYTYTDISTGFFEKAREVFSEVESKMTFKALNIEKDPIAQGYTEGSYDLIVASLVLHATHVMEDTMRNVRRLLKPGGYLIMLELGDYVDMRTGLMFGPLPGWWMGYDDGRKLSPTMSEDDWDKCMKKVGFSGVDAIVPRQEHVPISLAIMTAQAVDEHVEFIRNPFASDGMFLLGHHLTLIGGSTDKTAKLLEAALPYLRSFYKHVTTVKSLASLSTIELPFMGSVICLEDLDVAVFENLSTETLQGVQHLFTKSKSCLWVTQGRKDDNPYQNMTVGLGRVATLEMTHLRLQSLDFDVIDSSTAVIMAKSLLRFEATEAWEQQGLAKNLLWSVEPEMSYEKGSFRVPRLIPNHARNNRYNSSRRLITQNKDPRTSTIGLRWTSKGYEIHNESPASSGLAFDGRVELQVSHSSLEAIRITKADYAYLVLGTNLRTKEQAFAITPDRHSIVRVFDSWTVPYTMTTEEALRLLPLVQDHLMALATMSDFSSGEALILIEPRWRFARLLSNLAQEKGVKLILLTTRLDIKDQDWITLHPNAPRRIIQSHMPKTASRLISCTDDLEFEANVKACLPPNCKMQRTEIFSSRVSKLDSFSSMAFIPSSLRSAFVRAHHESSPGDKESIASVSDIVSRGKPAKATFFSWDSSPTIPVQITPVDLEPLFSSDKTYWLVGLTGGLGLSLCEWMIQRGAKYVVLTSRNPQVDAKWEAHMKAHDAVVRIYANDVTDRDSVRSVYKQIRDELPPIGGVAQGAMVLSDAMFVDMGLERVCKVVEPKVKGAIHLEELFSEADLEFFVFFSSMAYVTGNQGQSIYAAANAYMAALAAQRKKRGLAGSVINIGAIVGNGYVTRQLTDEQRDYLAHMGNVFMSEQDFHQIFAEGVVAGRPGNDDIPEIMTGLGLAHMDDSDKVTWFNNPKFSHCVLWPDDQGAAVGMSKQNVTVKSRLLLATTADEVNEAIQESFTMKLRSSLQIEDSVAILKMNAEELGLDSLVAVDLRSWFVKELNVEMPVLKILGGFTVAELVSAAQEQLPASLTPNFGKEIDPALKAAAMLEKAAKTETVPRITNEANTAAYREEVDEEEQEEDEADNRPNFFSSASKDATQSSERFAIDASHISKSREVAFKATLLAPPATRSKTSSSSSSFTSDPENDFMMKSQMSAATPLSSYNDEYITAEDIKFERVSPMSFGQARFWFLKFYLQDQTTFNITTSIRLSGRLNVETFANAVQAVGRRHEGLRTAFFTDRHNQPMQGILHQSVLHLEHLRVSSQEAIDIEYAKTKNHVYNIGGGETMKIILLSLADDLYQIIIGYHHINMDGMSLEVILSDLQKVYNQQQLARVVPQYLDFSESQRREHSTGKWGKEISFWKGEFADIPAPLPILPMSKKSNRSPLTKYASNTVKFKIDAATSAQIQIACKRAKASPFNFYLAAFKTLLYRTAGEEQNDICIGIADGGRNSEHVEESVGFFLNILPLRFKQDSAQTFLEALRDARSKVVAALANSRVPFDVILNEVNAPRAATHNPLFQAFINYRQGVQERRQFCGCDSEATQFDGSQTAYDISIDILANPGADSTVYISGQSDLYSEENVKLLAHSYLALIKSFAKNPASRLGRPPLYDPQDTHRALDVGVGPELTDTWPNTLVDRVDEMASRFGSQIALKGPRNQLTYSQMTDRIHSIASSLKSNKIGNCSRVGVLQDPSTDFFCSLLAILRIGAIFVPLELRLTSPRLAVIVEDSNIDAIIYDKANQKDLLTLGSGFQKVNVSLIPAKSTSTVVNEAQPGSPAVILYTSGSTGKPKGILLSHASWRNQIQSSTQAFRIPQGTGVHLQQSSWSFDIAISQTFVALANGASLLIVSKELRGDSIAMARMIVSDRITHVQATPSEMVSWLHDADANALRSSSWKFAMSGGEKMNSALIGEFKALGKSDLALVNAYGPAETTLAVGSAEIDILDPGALDTAFRLFPNYSVYILDSKKQPVPLGISGEVYIGGAGVATGYLNNDNLTKERFLPDDFAPERYLQNDWTIMHRSGDRGRLTADGLVLEGRVDGDTQIKLRGIRIDLQDIESTIVQHSKGAVRDAVVSLRKSGETQILAAHIVLSAAFSGNAKTILDSIQTSLPLPQYMRPATTLVVKTLPTNYSGKLDRKAVSELPLRPVSKTSVPVTKENKSPESELRTIWKQVLGDDITSSHEIDYETDFFHVGGNSLALVRVQGMLKAAFNVEPPVAQLFDNSTLGAMLNLISPASQTMSTEHSSLLPNVVEYSPQAAASSGTIDWEKETALTDDLYDAEINPTPRDQGLAFKTVAITGASGFLGKEILKRMVDDVHIDKIHAIAIRRHISDLPAIFSNAKVQVHRGDLNAPRLGLSETRAKEIFDETDTVIHNGADVSFLKTYKTLSKTNVGSTRELVKLCLPSRIPIHFISSASVAHLSGRASFGEESVSEYEPPQDGSDGYTATKWASERFLELVSEKFSIPVWIHRPSSITGAEAPALDLMTNLLQFSKTMSKVPYSPTWSGTLDFVSVESVAHDIVEEVKNDSAHSSGMVRFMYESGDLEIAVQDMQGSLAKQTGEEFDKVDVETWTREAVSEGLDELVAAYLSTAANLPIMFPRLIRDNKRRRIEQKVQEQPSRGSSLREVVGRWLWSRQ.

The 402-residue stretch at 10–411 folds into the Ketosynthase family 3 (KS3) domain; the sequence is NEPIAIVGSA…GANAHAILEA (402 aa). Positions 519-837 are acyl transferase; that stretch reads VFTGQGAQWA…TGLLSRDRDD (319 aa). Positions 909 to 1042 are N-terminal hotdog fold; the sequence is HELLGTKCPD…GRISALFGPP (134 aa). The segment at 909–1208 is dehydratase (DH) domain; that stretch reads HELLGTKCPD…LHTKPLGHAT (300 aa). In terms of domain architecture, PKS/mFAS DH spans 909–1210; sequence HELLGTKCPD…TKPLGHATPE (302 aa). His-941 acts as the Proton acceptor; for dehydratase activity in catalysis. The C-terminal hotdog fold stretch occupies residues 1057–1210; it reads MIDVDPEQFY…TKPLGHATPE (154 aa). Asp-1117 acts as the Proton donor; for dehydratase activity in catalysis. Positions 1349-1572 are methyltransferase (MT) domain; that stretch reads DDMLNDFYVK…VDEHVEFIRN (224 aa). The tract at residues 2073 to 2246 is ketoreductase (KR)domain; the sequence is TYWLVGLTGG…AGSVINIGAI (174 aa). Residues 2351 to 2433 enclose the Carrier 1 domain; it reads ATTADEVNEA…ELVSAAQEQL (83 aa). Ser-2393 carries the O-(pantetheine 4'-phosphoryl)serine modification. Disordered regions lie at residues 2460–2504 and 2535–2554; these read KTET…SKDA and ATRSKTSSSSSSFTSDPEND. Acidic residues predominate over residues 2479 to 2490; the sequence is EVDEEEQEEDEA. Residues 2495 to 2504 are compositionally biased toward polar residues; the sequence is NFFSSASKDA. Positions 2536-2549 are enriched in low complexity; it reads TRSKTSSSSSSFTS. The condensation stretch occupies residues 2584-3019; that stretch reads RVSPMSFGQA…LGRPPLYDPQ (436 aa). The interval 3047–3443 is adenylation; the sequence is EMASRFGSQI…TADGLVLEGR (397 aa). Residues 3562 to 3642 form the Carrier 2 domain; sequence KENKSPESEL…AMLNLISPAS (81 aa). Position 3602 is an O-(pantetheine 4'-phosphoryl)serine (Ser-3602). The interval 3703–3924 is reductase-like; sequence ITGASGFLGK…DFVSVESVAH (222 aa).

This sequence belongs to the NRP synthetase family.

It participates in mycotoxin biosynthesis. Hybrid PKS-NRPS synthetase; part of the gene cluster that mediates the biosynthesis of the mycotoxins phomacins, leucine-derived cytochalasans with potent actin polymerization-inhibitory activities and monocot-specific antigerminative activities. The first step in the pathway is catalyzed by the hybrid PKS-NRPS phmA, assisted by the enoyl reductase phmE, that are responsible for fusion of the leucine precursor and the polyketide backbone to produce a 2-pyrrolidone intermediate. The polyketide synthase module (PKS) of phmA is responsible for the synthesis of the polyketide backbone and the downstream nonribosomal peptide synthetase (NRPS) amidates the carboxyl end of the polyketide with the leucine precursor. Because phmA lacks a designated enoylreductase (ER) domain, the required activity is provided the enoyl reductase phmE. Reduction by the hydrolyase phmG, followed by dehydration and intra-molecular Diels-Alder cyclization by the Diels-Alderase phmD then yield the required isoindolone-fused macrocycle. A number of oxidative steps catalyzed by the tailoring cytochrome P450 monooxygenase phmB, the FAD-linked oxidoreductase phmC and the short-chain dehydrogenase/reductase phmF, are further required to afford the final products, phomacin D and phomacin E. The protein is Polyketide synthase-nonribosomal peptide synthetase phmA of Phaeosphaeria nodorum (strain SN15 / ATCC MYA-4574 / FGSC 10173) (Glume blotch fungus).